A 275-amino-acid chain; its full sequence is Formamidopyrimidine-DNA glycosylase (275 aa).

The active-site Schiff-base intermediate with DNA is Pro-2. Residue Glu-3 is the Proton donor of the active site. Lys-58 acts as the Proton donor; for beta-elimination activity in catalysis. Positions 93, 111, and 156 each coordinate DNA. An FPG-type zinc finger spans residues 241 to 275 (FVYDRAGEPCRVCGTPIRQIVQGQRSTYFCPTCQR). Residue Arg-265 is the Proton donor; for delta-elimination activity of the active site.

This sequence belongs to the FPG family. In terms of assembly, monomer. Zn(2+) is required as a cofactor.

It catalyses the reaction Hydrolysis of DNA containing ring-opened 7-methylguanine residues, releasing 2,6-diamino-4-hydroxy-5-(N-methyl)formamidopyrimidine.. The catalysed reaction is 2'-deoxyribonucleotide-(2'-deoxyribose 5'-phosphate)-2'-deoxyribonucleotide-DNA = a 3'-end 2'-deoxyribonucleotide-(2,3-dehydro-2,3-deoxyribose 5'-phosphate)-DNA + a 5'-end 5'-phospho-2'-deoxyribonucleoside-DNA + H(+). Functionally, involved in base excision repair of DNA damaged by oxidation or by mutagenic agents. Acts as a DNA glycosylase that recognizes and removes damaged bases. Has a preference for oxidized purines, such as 7,8-dihydro-8-oxoguanine (8-oxoG). Has AP (apurinic/apyrimidinic) lyase activity and introduces nicks in the DNA strand. Cleaves the DNA backbone by beta-delta elimination to generate a single-strand break at the site of the removed base with both 3'- and 5'-phosphates. This Burkholderia multivorans (strain ATCC 17616 / 249) protein is Formamidopyrimidine-DNA glycosylase.